The following is a 1051-amino-acid chain: Probable valine--tRNA ligase, mitochondrial (1051 aa).

The transit peptide at 1–20 (MNKLLFLSKKSSTSNLYRFY) directs the protein to the mitochondrion. The short motif at 71–81 (PNVTGSLHIGH) is the 'HIGH' region element. Positions 606–610 (KMSKS) match the 'KMSKS' region motif. Lys609 serves as a coordination point for ATP. Residues 972 to 1019 (KELQISIEFDKEINNQLNQKLINPNQSNDKKILKLENFIKQLQDEIDN) are a coiled coil.

Belongs to the class-I aminoacyl-tRNA synthetase family.

The protein resides in the mitochondrion. It catalyses the reaction tRNA(Val) + L-valine + ATP = L-valyl-tRNA(Val) + AMP + diphosphate. This Dictyostelium discoideum (Social amoeba) protein is Probable valine--tRNA ligase, mitochondrial (valS2).